The primary structure comprises 203 residues: Snake venom metalloproteinase adamalysin-2 (203 aa).

Positions Arg-7 to Pro-203 constitute a Peptidase M12B domain. Ca(2+) is bound by residues Glu-10 and Asp-94. 2 cysteine pairs are disulfide-bonded: Cys-118–Cys-198 and Cys-158–Cys-165. Position 143 (His-143) interacts with Zn(2+). Glu-144 is a catalytic residue. Residues His-147 and His-153 each coordinate Zn(2+). Residues Cys-198 and Asn-201 each coordinate Ca(2+).

It belongs to the venom metalloproteinase (M12B) family. P-I subfamily. As to quaternary structure, monomer. Zn(2+) serves as cofactor. In terms of tissue distribution, expressed by the venom gland.

It localises to the secreted. It carries out the reaction Cleavage of 1-Phe-|-Val-2, 5-His-|-Leu-6, 14-Ala-|-Leu-15, 15-Leu-|-Tyr-16, and 16-Tyr-|-Leu-17 of insulin B chain.. Functionally, has no significant hemorrhagic activity, but inactivates serpins by limited proteolysis of their reactive-site loops. The polypeptide is Snake venom metalloproteinase adamalysin-2 (Crotalus adamanteus (Eastern diamondback rattlesnake)).